The chain runs to 309 residues: Olfactory receptor 4A47 (309 aa).

At 1 to 23 the chain is on the extracellular side; that stretch reads MEPRKNVTDFVLLGFTQNPKEQK. N-linked (GlcNAc...) asparagine glycosylation occurs at Asn-6. Residues 24–47 traverse the membrane as a helical segment; it reads VLFVMFLLFYILTMVGNLLIVVTV. The Cytoplasmic portion of the chain corresponds to 48-55; that stretch reads TVSETLGS. The helical transmembrane segment at 56–77 threads the bilayer; the sequence is PMYFFLAGLSFIDIIYSSSISP. At 78-98 the chain is on the extracellular side; sequence RLISGLFFGNNSISFQSCMAQ. An N-linked (GlcNAc...) asparagine glycan is attached at Asn-87. Cys-95 and Cys-187 are oxidised to a cystine. The helical transmembrane segment at 99–118 threads the bilayer; the sequence is LFIEHIFGGSEVFLLLVMAY. Residues 119–137 are Cytoplasmic-facing; that stretch reads DCYVAICKPLHYLVIMRQW. Residues 138–156 traverse the membrane as a helical segment; sequence VCVVLLVVSWVGGFLHSVF. Over 157 to 193 the chain is Extracellular; sequence QLSIIYGLPFCGPNVIDHFFCDMYPLLKLVCTDTHAI. Residues 194-217 traverse the membrane as a helical segment; it reads GLLVVANGGLACTIVFLLLLISYG. At 218–233 the chain is on the cytoplasmic side; that stretch reads VILHSLKNLSQKGRQK. Residues 234-256 form a helical membrane-spanning segment; the sequence is ALSTCSSHMTVVVFFFVPCIFMY. The Extracellular portion of the chain corresponds to 257-267; that stretch reads ARPARTFPIDK. Residues 268–287 form a helical membrane-spanning segment; it reads SVSVFYTVITPMLNPLIYTL. Residues 288–309 are Cytoplasmic-facing; the sequence is RNSEMTSAMKKLWRRDLISSST.

This sequence belongs to the G-protein coupled receptor 1 family.

It localises to the cell membrane. Odorant receptor. The protein is Olfactory receptor 4A47 (OR4A47) of Homo sapiens (Human).